The following is a 255-amino-acid chain: Zinc finger CCCH domain-containing protein 37 (255 aa).

C3H1-type zinc fingers lie at residues 98–128 (AYTG…HGTF) and 137–159 (YRTR…AHTA).

The protein is Zinc finger CCCH domain-containing protein 37 of Oryza sativa subsp. japonica (Rice).